We begin with the raw amino-acid sequence, 610 residues long: tRNA uridine 5-carboxymethylaminomethyl modification enzyme MnmG (610 aa).

14–19 lines the FAD pocket; sequence GAGHAG. Residue 274–288 participates in NAD(+) binding; that stretch reads GPRYCPSIEDKIVKF.

The protein belongs to the MnmG family. In terms of assembly, homodimer. Heterotetramer of two MnmE and two MnmG subunits. The cofactor is FAD.

Its subcellular location is the cytoplasm. NAD-binding protein involved in the addition of a carboxymethylaminomethyl (cmnm) group at the wobble position (U34) of certain tRNAs, forming tRNA-cmnm(5)s(2)U34. The polypeptide is tRNA uridine 5-carboxymethylaminomethyl modification enzyme MnmG (Chlamydia trachomatis serovar A (strain ATCC VR-571B / DSM 19440 / HAR-13)).